A 429-amino-acid chain; its full sequence is Serine hydroxymethyltransferase 1 (429 aa).

(6S)-5,6,7,8-tetrahydrofolate contacts are provided by residues Leu-125 and 129–131 (GHL). Residue Lys-234 is modified to N6-(pyridoxal phosphate)lysine.

Belongs to the SHMT family. Homodimer. Requires pyridoxal 5'-phosphate as cofactor.

The protein resides in the cytoplasm. The enzyme catalyses (6R)-5,10-methylene-5,6,7,8-tetrahydrofolate + glycine + H2O = (6S)-5,6,7,8-tetrahydrofolate + L-serine. The protein operates within one-carbon metabolism; tetrahydrofolate interconversion. Its pathway is amino-acid biosynthesis; glycine biosynthesis; glycine from L-serine: step 1/1. Catalyzes the reversible interconversion of serine and glycine with tetrahydrofolate (THF) serving as the one-carbon carrier. This reaction serves as the major source of one-carbon groups required for the biosynthesis of purines, thymidylate, methionine, and other important biomolecules. Also exhibits THF-independent aldolase activity toward beta-hydroxyamino acids, producing glycine and aldehydes, via a retro-aldol mechanism. This is Serine hydroxymethyltransferase 1 from Agrobacterium fabrum (strain C58 / ATCC 33970) (Agrobacterium tumefaciens (strain C58)).